The primary structure comprises 230 residues: Large ribosomal subunit protein uL1 (230 aa).

The protein belongs to the universal ribosomal protein uL1 family. In terms of assembly, part of the 50S ribosomal subunit.

In terms of biological role, binds directly to 23S rRNA. The L1 stalk is quite mobile in the ribosome, and is involved in E site tRNA release. Functionally, protein L1 is also a translational repressor protein, it controls the translation of the L11 operon by binding to its mRNA. The polypeptide is Large ribosomal subunit protein uL1 (Leptospira borgpetersenii serovar Hardjo-bovis (strain L550)).